We begin with the raw amino-acid sequence, 288 residues long: Serine/threonine-protein phosphatase PGAM5, mitochondrial (288 aa).

Topologically, residues 1-6 are mitochondrial matrix; the sequence is MAFRQA. Residues 7 to 29 traverse the membrane as a helical segment; the sequence is LQLAACGLAGGSAAVLFSAVAVG. At 30 to 288 the chain is on the mitochondrial intermembrane side; sequence KPRAGGDADT…FMPPDKITRS (259 aa). Positions 76–81 are interaction with KEAP1; the sequence is NVEFGE. Position 86 is a phosphoserine (S86). N6-acetyllysine is present on residues K115, K143, and K190.

It belongs to the phosphoglycerate mutase family. BPG-dependent PGAM subfamily. As to quaternary structure, dimer. Forms a ternary complex with NFE2L2 and KEAP1. Interacts with BCL2L1 and MAP3K5. Upon TNF-induced necrosis, forms in complex with RIPK1, RIPK3 and MLKL; the formation of this complex leads to PGAM5 phosphorylation. Isoform 2, but not isoform 1, interacts with DNM1L; this interaction leads to DNM1L dephosphorylation and activation and eventually to mitochondria fragmentation. Phosphorylated by the RIPK1/RIPK3 complex under necrotic conditions. This phosphorylation increases PGAM5 phosphatase activity. Post-translationally, proteolytically cleaved by PARL in response to loss of mitochondrial membrane potential.

The protein localises to the mitochondrion outer membrane. It localises to the mitochondrion inner membrane. It catalyses the reaction O-phospho-L-seryl-[protein] + H2O = L-seryl-[protein] + phosphate. The catalysed reaction is O-phospho-L-threonyl-[protein] + H2O = L-threonyl-[protein] + phosphate. Functionally, mitochondrial serine/threonine phosphatase that dephosphorylates various substrates and thus plays a role in different biological processes including cellular senescence or mitophagy. Modulates cellular senescence by regulating mitochondrial dynamics. Mechanistically, participates in mitochondrial fission through dephosphorylating DNM1L/DRP1. Additionally, dephosphorylates MFN2 in a stress-sensitive manner and consequently protects it from ubiquitination and degradation to promote mitochondrial network formation. Regulates mitophagy independent of PARKIN by interacting with and dephosphorylating FUNDC1, which interacts with LC3. Regulates anti-oxidative response by forming a tertiary complex with KEAP1 and NRF2. Regulates necroptosis by acting as a RIPK3 target and recruiting the RIPK1-RIPK3-MLKL necrosis 'attack' complex to mitochondria. This Rattus norvegicus (Rat) protein is Serine/threonine-protein phosphatase PGAM5, mitochondrial (Pgam5).